We begin with the raw amino-acid sequence, 424 residues long: Enolase (424 aa).

Gln162 provides a ligand contact to (2R)-2-phosphoglycerate. Glu204 functions as the Proton donor in the catalytic mechanism. Mg(2+) is bound by residues Asp241, Glu284, and Asp311. (2R)-2-phosphoglycerate is bound by residues Lys336, Arg365, Ser366, and Lys387. The active-site Proton acceptor is the Lys336.

Belongs to the enolase family. Mg(2+) is required as a cofactor.

It localises to the cytoplasm. It is found in the secreted. The protein resides in the cell surface. It carries out the reaction (2R)-2-phosphoglycerate = phosphoenolpyruvate + H2O. It functions in the pathway carbohydrate degradation; glycolysis; pyruvate from D-glyceraldehyde 3-phosphate: step 4/5. In terms of biological role, catalyzes the reversible conversion of 2-phosphoglycerate (2-PG) into phosphoenolpyruvate (PEP). It is essential for the degradation of carbohydrates via glycolysis. The polypeptide is Enolase (Mesorhizobium japonicum (strain LMG 29417 / CECT 9101 / MAFF 303099) (Mesorhizobium loti (strain MAFF 303099))).